The primary structure comprises 58 residues: Small ribosomal subunit protein eS27 (58 aa).

Zn(2+)-binding residues include cysteine 10, cysteine 13, cysteine 29, and cysteine 32. The segment at 10–32 adopts a C4-type zinc-finger fold; the sequence is CPDCEHEQVIFDHPSTIVKCIIC.

This sequence belongs to the eukaryotic ribosomal protein eS27 family. As to quaternary structure, part of the 30S ribosomal subunit. Zn(2+) serves as cofactor.

The sequence is that of Small ribosomal subunit protein eS27 from Archaeoglobus fulgidus (strain ATCC 49558 / DSM 4304 / JCM 9628 / NBRC 100126 / VC-16).